A 107-amino-acid polypeptide reads, in one-letter code: Ig kappa chain V-VI region XRPC 24 (107 aa).

Positions 1–23 (EIVLTQSPAITAASLGQKVTITC) are framework-1. A disulfide bridge links Cys23 with Cys87. Residues 24–33 (SASSSVSYMH) are complementarity-determining-1. The framework-2 stretch occupies residues 34-48 (WYQQKSGTSPKPWIY). Positions 49–55 (EISKLAS) are complementarity-determining-2. A framework-3 region spans residues 56–87 (GVPARFSGSGSGTSYSLTISSMEAEDAAIYYC). Positions 88-96 (QQWNYPLIT) are complementarity-determining-3. Residues 97–106 (FGSGTKLEIK) are framework-4.

The sequence is that of Ig kappa chain V-VI region XRPC 24 from Mus musculus (Mouse).